Consider the following 172-residue polypeptide: Ribosome maturation factor RimM (172 aa).

The region spanning Asp-93 to Met-167 is the PRC barrel domain.

Belongs to the RimM family. As to quaternary structure, binds ribosomal protein uS19.

The protein resides in the cytoplasm. In terms of biological role, an accessory protein needed during the final step in the assembly of 30S ribosomal subunit, possibly for assembly of the head region. Essential for efficient processing of 16S rRNA. May be needed both before and after RbfA during the maturation of 16S rRNA. It has affinity for free ribosomal 30S subunits but not for 70S ribosomes. This is Ribosome maturation factor RimM from Exiguobacterium sp. (strain ATCC BAA-1283 / AT1b).